Here is a 79-residue protein sequence, read N- to C-terminus: MQALRVSQALIRSFSSTARNRFQNRVREKQKLFQEDNDIPLYLKGGIVDNILYRVTMTLCLGGTVYSLYSLGWASFPRN.

The transit peptide at 1-21 directs the protein to the mitochondrion; sequence MQALRVSQALIRSFSSTARNR. The Mitochondrial matrix portion of the chain corresponds to 22–46; the sequence is FQNRVREKQKLFQEDNDIPLYLKGG. A helical membrane pass occupies residues 47 to 75; the sequence is IVDNILYRVTMTLCLGGTVYSLYSLGWAS. At 76–79 the chain is on the mitochondrial intermembrane side; sequence FPRN.

Belongs to the cytochrome c oxidase VIIa family. In terms of assembly, component of the complex IV (CIV, cytochrome c oxidase), a multisubunit enzyme composed of 14 subunits. The complex is composed of a catalytic core of 3 subunits MT-CO1, MT-CO2 and MT-CO3, encoded in the mitochondrial DNA, and 11 supernumerary subunits COX4I1 (or COX4I2), COX5A, COX5B, COX6A2 (or COX6A1), COX6B1 (or COX6B2), COX6C, COX7A1 (or COX7A2), COX7B, COX7C, COX8B and NDUFA4, which are encoded in the nuclear genome. The complex exists as a monomer or a dimer and forms supercomplexes (SCs) in the inner mitochondrial membrane with NADH-ubiquinone oxidoreductase (complex I, CI) and ubiquinol-cytochrome c oxidoreductase (cytochrome b-c1 complex, complex III, CIII), resulting in different assemblies (supercomplex SCI(1)III(2)IV(1) and megacomplex MCI(2)III(2)IV(2)).

The protein localises to the mitochondrion inner membrane. It functions in the pathway energy metabolism; oxidative phosphorylation. Its function is as follows. Component of the mitochondrial respiratory complex IV (CIV, also named cytochrome c oxidase complex), the last enzyme in the mitochondrial electron transport chain which drives oxidative phosphorylation. The CIV complex is the component of the respiratory chain that catalyzes the reduction of oxygen to water. Acts as an assembly factor that specifically drives the homodimerization of CIV complexes, mediating the formation of mitochondrial respiratory supercomplexes (respirasomes) containing two CIV: supercomplxes with two molecules of CIV show improved activity. Despite being highly expressed in brown adipose tissue, not required for thermogenesis. The sequence is that of Cytochrome c oxidase subunit 7A1, mitochondrial (COX7A1) from Homo sapiens (Human).